Consider the following 667-residue polypeptide: E3 ubiquitin-protein ligase Midline-1 (667 aa).

The RING-type zinc finger occupies 10 to 60; that stretch reads CPICLELLEDPLLLPCAHSLCFNCAHRILVSHCATNEPVESINAFQCPTCR. 2 positions are modified to phosphoserine: Ser-92 and Ser-96. 2 B box-type zinc fingers span residues 116-165 and 172-212; these read KVLC…IEPI and GLMC…VAAL. Positions 119, 122, 134, 137, 142, 145, 150, 159, 175, 178, 198, and 204 each coordinate Zn(2+). The stretch at 205-264 forms a coiled coil; it reads RDHQVAALSERYDKLKQNLESNLTNLIKRNTELETLLAKLIQTCQHVEVNASRQEAKLTE. The 60-residue stretch at 320 to 379 folds into the COS domain; it reads LKENDHARFLQTAKNITERVSMATASSQVLIPEINLNDTFDTFALDFSREKKLLECLDYL. The region spanning 381-484 is the Fibronectin type-III domain; sequence APNPPTIREE…EPGKLKTNSQ (104 aa). The segment covering 471–485 has biased composition (polar residues); sequence SRSSEPGKLKTNSQP. Positions 471-524 are disordered; that stretch reads SRSSEPGKLKTNSQPFKLDPKSAHRKLKVSHDNLTVERDESSSKKSHTPERFTS. The B30.2/SPRY domain maps to 482-659; the sequence is NSQPFKLDPK…IITGLPIPDH (178 aa). Positions 499-520 are enriched in basic and acidic residues; sequence VSHDNLTVERDESSSKKSHTPE. Ser-511 carries the phosphoserine modification.

This sequence belongs to the TRIM/RBCC family. As to quaternary structure, homodimer or heterodimer with MID2. Interacts with IGBP1.

It is found in the cytoplasm. It localises to the cytoskeleton. The enzyme catalyses S-ubiquitinyl-[E2 ubiquitin-conjugating enzyme]-L-cysteine + [acceptor protein]-L-lysine = [E2 ubiquitin-conjugating enzyme]-L-cysteine + N(6)-ubiquitinyl-[acceptor protein]-L-lysine.. In terms of biological role, has E3 ubiquitin ligase activity towards IGBP1, promoting its monoubiquitination, which results in deprotection of the catalytic subunit of protein phosphatase PP2A, and its subsequent degradation by polyubiquitination. The sequence is that of E3 ubiquitin-protein ligase Midline-1 (Mid1) from Mus spretus (Western Mediterranean mouse).